Consider the following 306-residue polypeptide: sn-1-specific diacylglycerol lipase ABHD11 (306 aa).

Residues 19-40 (GPSFARVPVAPSSSSGGRGGAE) form a disordered region. Residues 23-33 (ARVPVAPSSSS) are compositionally biased toward low complexity. At Lys78 the chain carries N6-succinyllysine. Active-site charge relay system residues include Ser132, Asp228, and His287.

Belongs to the AB hydrolase superfamily. As to quaternary structure, interacts with OGDH and DLST; this interaction maintains the functional lipoylation of the 2-oxoglutarate dehydrogenase complex. Post-translationally, phosphorylated. In terms of tissue distribution, ubiquitously expressed. Highly expressed in small intestine, prostate and thyroid, while aorta and colon tissues exhibit weak expression levels.

The protein localises to the mitochondrion. It localises to the mitochondrion matrix. It carries out the reaction 1-octadecanoyl-2-(5Z,8Z,11Z,14Z-eicosatetraenoyl)-sn-glycerol + H2O = 2-(5Z,8Z,11Z,14Z-eicosatetraenoyl)-glycerol + octadecanoate + H(+). It catalyses the reaction a 1,2-diacyl-sn-glycerol + H2O = a 2-acylglycerol + a fatty acid + H(+). The catalysed reaction is a 1,3-diacyl-sn-glycerol + H2O = a 1-acyl-sn-glycerol + a fatty acid + H(+). The enzyme catalyses 1-octadecanoyl-2-(9Z-octadecenoyl)-sn-glycerol + H2O = 2-(9Z-octadecenoyl)-glycerol + octadecanoate + H(+). It carries out the reaction 1-octadecanoyl-2-(4Z,7Z,10Z,13Z,16Z,19Z-docosahexaenoyl)-sn-glycerol + H2O = 2-(4Z,7Z,10Z,13Z,16Z,19Z-docosahexaenoyl)-glycerol + octadecanoate + H(+). It catalyses the reaction 1,2-didecanoylglycerol + H2O = decanoylglycerol + decanoate + H(+). Catalyzes the hydrolysis of diacylglycerol in vitro and may function as a key regulator in lipid metabolism, namely by regulating the intracellular levels of diacylglycerol. 1,2-diacyl-sn-glycerols are the preferred substrate over 1,3-diacyl-sn-glycerols. The enzyme hydrolyzes stearate in preference to palmitate from the sn-1 position of 1,2-diacyl-sn-glycerols. Maintains the functional lipoylation of the 2-oxoglutarate dehydrogenase complex (OGDHc) through its interaction with the OGDHc by preventing the formation of lipoyl adducts. In addition, is also required for the expansion and differentiation of embryonic stem cells (ESCs). The polypeptide is sn-1-specific diacylglycerol lipase ABHD11 (Homo sapiens (Human)).